The chain runs to 319 residues: ATP-dependent 6-phosphofructokinase (319 aa).

Residue Gly-11 participates in ATP binding. 21–25 (RAVVR) contributes to the ADP binding site. ATP is bound by residues 72–73 (RC) and 102–105 (GDGS). Asp-103 is a binding site for Mg(2+). 125-127 (TID) contributes to the substrate binding site. The active-site Proton acceptor is Asp-127. Arg-154 is a binding site for ADP. Residues Arg-162 and 169-171 (MGR) each bind substrate. Residues 185–187 (GAE), Arg-211, and 213–215 (KRH) contribute to the ADP site. Substrate-binding positions include Glu-222, Arg-243, and 249-252 (HVQR).

The protein belongs to the phosphofructokinase type A (PFKA) family. ATP-dependent PFK group I subfamily. Prokaryotic clade 'B1' sub-subfamily. As to quaternary structure, homotetramer. The cofactor is Mg(2+).

The protein resides in the cytoplasm. The catalysed reaction is beta-D-fructose 6-phosphate + ATP = beta-D-fructose 1,6-bisphosphate + ADP + H(+). It participates in carbohydrate degradation; glycolysis; D-glyceraldehyde 3-phosphate and glycerone phosphate from D-glucose: step 3/4. Its activity is regulated as follows. Allosterically activated by ADP and other diphosphonucleosides, and allosterically inhibited by phosphoenolpyruvate. Functionally, catalyzes the phosphorylation of D-fructose 6-phosphate to fructose 1,6-bisphosphate by ATP, the first committing step of glycolysis. The protein is ATP-dependent 6-phosphofructokinase of Clostridioides difficile (strain 630) (Peptoclostridium difficile).